The following is a 222-amino-acid chain: GTP cyclohydrolase 1 (222 aa).

Zn(2+) contacts are provided by C111, H114, and C182.

Belongs to the GTP cyclohydrolase I family. As to quaternary structure, toroid-shaped homodecamer, composed of two pentamers of five dimers.

The enzyme catalyses GTP + H2O = 7,8-dihydroneopterin 3'-triphosphate + formate + H(+). The protein operates within cofactor biosynthesis; 7,8-dihydroneopterin triphosphate biosynthesis; 7,8-dihydroneopterin triphosphate from GTP: step 1/1. This Enterobacter sp. (strain 638) protein is GTP cyclohydrolase 1.